Here is a 312-residue protein sequence, read N- to C-terminus: Glyoxylate/hydroxypyruvate reductase A (312 aa).

Arg227 is an active-site residue. Residue His275 is the Proton donor of the active site.

The protein belongs to the D-isomer specific 2-hydroxyacid dehydrogenase family. GhrA subfamily.

Its subcellular location is the cytoplasm. The catalysed reaction is glycolate + NADP(+) = glyoxylate + NADPH + H(+). It catalyses the reaction (R)-glycerate + NAD(+) = 3-hydroxypyruvate + NADH + H(+). It carries out the reaction (R)-glycerate + NADP(+) = 3-hydroxypyruvate + NADPH + H(+). Catalyzes the NADPH-dependent reduction of glyoxylate and hydroxypyruvate into glycolate and glycerate, respectively. This Shigella boydii serotype 18 (strain CDC 3083-94 / BS512) protein is Glyoxylate/hydroxypyruvate reductase A.